A 332-amino-acid polypeptide reads, in one-letter code: MKQIQTKVDWKKIAFEGIEGKRITKEDALAILEADDTEVLEIMNAAYMIRHHYFGKKVKLNMIINTKSGLCPEDCGYCSQSIVSEAPIDKYAWLTQEKIVEGAHEAVRRKAGTYCIVASGRRPTDKEVNHVIGAVKEIKETTDLKICCCLGFLNEDQAKRLAEAGVHRYNHNLNTHANHYDNICSTHTYDDRVDTVEKVKQAGISPCSGAIFGMGETKEERVEIAFELQRLDADSIPCNFLVSVKGTPFEGRKELTPVECLKILAMMRFVNPSKEIRISGGRELNLRSVQPLGLFAANSIFVGDYLTTVGQESTADWEMIQDLGFEIEECAL.

A Radical SAM core domain is found at Tyr-53–Arg-282. The [4Fe-4S] cluster site is built by Cys-71, Cys-75, and Cys-78. [2Fe-2S] cluster-binding residues include Cys-115, Cys-147, Cys-207, and Arg-277.

The protein belongs to the radical SAM superfamily. Biotin synthase family. Homodimer. [4Fe-4S] cluster serves as cofactor. Requires [2Fe-2S] cluster as cofactor.

The enzyme catalyses (4R,5S)-dethiobiotin + (sulfur carrier)-SH + 2 reduced [2Fe-2S]-[ferredoxin] + 2 S-adenosyl-L-methionine = (sulfur carrier)-H + biotin + 2 5'-deoxyadenosine + 2 L-methionine + 2 oxidized [2Fe-2S]-[ferredoxin]. It functions in the pathway cofactor biosynthesis; biotin biosynthesis; biotin from 7,8-diaminononanoate: step 2/2. Its function is as follows. Catalyzes the conversion of dethiobiotin (DTB) to biotin by the insertion of a sulfur atom into dethiobiotin via a radical-based mechanism. The polypeptide is Biotin synthase (Bacillus cytotoxicus (strain DSM 22905 / CIP 110041 / 391-98 / NVH 391-98)).